Here is a 439-residue protein sequence, read N- to C-terminus: tRNA modification GTPase MnmE (439 aa).

The (6S)-5-formyl-5,6,7,8-tetrahydrofolate site is built by R26, E88, and R127. Residues G220–I367 enclose the TrmE-type G domain. N230 is a binding site for K(+). GTP-binding positions include N230–S235, T249–T255, and D274–G277. S234 contacts Mg(2+). K(+) contacts are provided by T249, I251, and T254. T255 serves as a coordination point for Mg(2+). Position 439 (K439) interacts with (6S)-5-formyl-5,6,7,8-tetrahydrofolate.

Belongs to the TRAFAC class TrmE-Era-EngA-EngB-Septin-like GTPase superfamily. TrmE GTPase family. Homodimer. Heterotetramer of two MnmE and two MnmG subunits. K(+) serves as cofactor.

The protein resides in the cytoplasm. Its function is as follows. Exhibits a very high intrinsic GTPase hydrolysis rate. Involved in the addition of a carboxymethylaminomethyl (cmnm) group at the wobble position (U34) of certain tRNAs, forming tRNA-cmnm(5)s(2)U34. The sequence is that of tRNA modification GTPase MnmE from Deinococcus geothermalis (strain DSM 11300 / CIP 105573 / AG-3a).